The sequence spans 275 residues: 4-deoxy-L-threo-5-hexosulose-uronate ketol-isomerase (275 aa).

Positions 193, 195, 200, and 242 each coordinate Zn(2+).

Belongs to the KduI family. Zn(2+) serves as cofactor.

It catalyses the reaction 5-dehydro-4-deoxy-D-glucuronate = 3-deoxy-D-glycero-2,5-hexodiulosonate. Its pathway is glycan metabolism; pectin degradation; 2-dehydro-3-deoxy-D-gluconate from pectin: step 4/5. In terms of biological role, catalyzes the isomerization of 5-dehydro-4-deoxy-D-glucuronate to 3-deoxy-D-glycero-2,5-hexodiulosonate. The sequence is that of 4-deoxy-L-threo-5-hexosulose-uronate ketol-isomerase from Bacillus pumilus (strain SAFR-032).